Reading from the N-terminus, the 506-residue chain is Pentatricopeptide repeat-containing protein At5g18475 (506 aa).

The tract at residues serine 28–asparagine 48 is disordered. 12 PPR repeats span residues asparagine 88–phenylalanine 122, glutamine 123–proline 158, serine 159–proline 194, asparagine 195–tyrosine 229, asparagine 231–proline 266, aspartate 267–proline 301, asparagine 302–leucine 336, aspartate 337–alanine 371, aspartate 372–leucine 406, asparagine 407–proline 441, histidine 442–proline 476, and glycine 477–serine 506.

Belongs to the PPR family. P subfamily.

This chain is Pentatricopeptide repeat-containing protein At5g18475, found in Arabidopsis thaliana (Mouse-ear cress).